Reading from the N-terminus, the 389-residue chain is Leucine aminopeptidase 1 (389 aa).

Residues 1 to 18 (MKSSVLLSLCTAALVAGA) form the signal peptide. Residues 19–89 (AHPLEPQVVL…INANRLIEKS (71 aa)) constitute a propeptide that is removed on maturation. Asn99, Asn156, and Asn180 each carry an N-linked (GlcNAc...) asparagine glycan. Residues His188, Asp207, Glu246, and Asp273 each coordinate Zn(2+). Cys322 and Cys326 form a disulfide bridge. Position 355 (His355) interacts with Zn(2+).

It belongs to the peptidase M28 family. M28E subfamily. As to quaternary structure, monomer. Zn(2+) serves as cofactor.

Its subcellular location is the secreted. In terms of biological role, extracellular aminopeptidase that allows assimilation of proteinaceous substrates. The polypeptide is Leucine aminopeptidase 1 (LAP1) (Phaeosphaeria nodorum (strain SN15 / ATCC MYA-4574 / FGSC 10173) (Glume blotch fungus)).